The chain runs to 155 residues: Large ribosomal subunit protein eL24 (155 aa).

Over residues 93-123 (KRNARPETRNATRAKHAEAAKERKEKEAERR) the composition is skewed to basic and acidic residues. Residues 93-155 (KRNARPETRN…SAPKVQATSR (63 aa)) are disordered.

Belongs to the eukaryotic ribosomal protein eL24 family.

The sequence is that of Large ribosomal subunit protein eL24 (RPL24) from Yarrowia lipolytica (strain CLIB 122 / E 150) (Yeast).